The sequence spans 160 residues: MTADVPNARLVDVELDESIGRSTPDVEHERAVAIFDLIEENSFHPVGDQKGGPYRLKLSLMESRLIFSITRENGDAVATHILSLTPLRRVVRDYFMIYESYYQAIRSATPSKIEAIDMGRRGLHNEGSQTLQARLKGKIEVDFDTARRLFTLVCVLHWRG.

It belongs to the UPF0262 family.

The sequence is that of UPF0262 protein BSUIS_A0274 from Brucella suis (strain ATCC 23445 / NCTC 10510).